Reading from the N-terminus, the 367-residue chain is AdoMet-dependent heme synthase (367 aa).

The region spanning aspartate 15 to alanine 238 is the Radical SAM core domain. Residues cysteine 31, cysteine 35, and cysteine 38 each contribute to the [4Fe-4S] cluster site.

Belongs to the radical SAM superfamily. Requires [4Fe-4S] cluster as cofactor.

It carries out the reaction Fe-coproporphyrin III + 2 S-adenosyl-L-methionine = heme b + 2 5'-deoxyadenosine + 2 L-methionine + 2 CO2. It functions in the pathway porphyrin-containing compound metabolism; protoheme biosynthesis. Its function is as follows. Involved in siroheme-dependent heme b biosynthesis. Catalyzes the conversion of Fe-coproporphyrin III into heme by the oxidative decarboxylation of two propionate side chains. This is AdoMet-dependent heme synthase from Nitratidesulfovibrio vulgaris (strain ATCC 29579 / DSM 644 / CCUG 34227 / NCIMB 8303 / VKM B-1760 / Hildenborough) (Desulfovibrio vulgaris).